Reading from the N-terminus, the 159-residue chain is Large ribosomal subunit protein uL11 (159 aa).

It belongs to the universal ribosomal protein uL11 family. Part of the ribosomal stalk of the 50S ribosomal subunit. Interacts with L10 and the large rRNA to form the base of the stalk. L10 forms an elongated spine to which L12 dimers bind in a sequential fashion forming a multimeric L10(L12)X complex.

Functionally, forms part of the ribosomal stalk which helps the ribosome interact with GTP-bound translation factors. This chain is Large ribosomal subunit protein uL11, found in Methanococcus maripaludis (strain C6 / ATCC BAA-1332).